The chain runs to 317 residues: Melanocyte-stimulating hormone receptor (317 aa).

Over 1 to 37 the chain is Extracellular; sequence MPVQGSQRRLLGSLNSTPTATPKLGLAANQTGAWCLE. The N-linked (GlcNAc...) asparagine glycan is linked to Asn-29. Residues 38–63 traverse the membrane as a helical segment; sequence VSIPDGLFLSLGLVSLVENVLVVAAI. The Cytoplasmic segment spans residues 64–72; the sequence is AKNRNLHSP. The chain crosses the membrane as a helical span at residues 73-93; the sequence is MYCFICCLALSDLLVSGSNML. Residues 94–118 lie on the Extracellular side of the membrane; that stretch reads ETAVILLLEAGALAARAAVVQQLDN. The chain crosses the membrane as a helical span at residues 119–140; sequence VIDVITCSSMLSSLCFLGAIAV. Residues 141 to 163 lie on the Cytoplasmic side of the membrane; it reads DRYISIFYALRYHSIVTLPRAQR. A helical membrane pass occupies residues 164 to 183; that stretch reads VVAAIWVASVLFSTLFIAYY. Over 184-191 the chain is Extracellular; it reads DHAAVLLC. A helical membrane pass occupies residues 192-211; it reads LVVFFLAMLVLMAVLYVHML. At 212–240 the chain is on the cytoplasmic side; that stretch reads ARACQHAQGIAQLHKRQRPAHQGFGLKGA. Residues 241–266 form a helical membrane-spanning segment; sequence ATLTILLGIFFLCWGPFFLHLTLIVL. Over 267 to 279 the chain is Extracellular; it reads CPQHPTCSCIFKN. Residues 280 to 300 form a helical membrane-spanning segment; sequence FNLFLALIICNAIIDPLIYAF. Over 301–317 the chain is Cytoplasmic; the sequence is RSQELRRTLKEVLLCSW. A lipid anchor (S-palmitoyl cysteine) is attached at Cys-315.

It belongs to the G-protein coupled receptor 1 family. Interacts with MGRN1, but does not undergo MGRN1-mediated ubiquitination; this interaction competes with GNAS-binding and thus inhibits agonist-induced cAMP production. Interacts with OPN3; the interaction results in a decrease in MC1R-mediated cAMP signaling and ultimately a decrease in melanin production in melanocytes.

The protein resides in the cell membrane. In terms of biological role, receptor for MSH (alpha, beta and gamma) and ACTH. The activity of this receptor is mediated by G proteins which activate adenylate cyclase. Mediates melanogenesis, the production of eumelanin (black/brown) and phaeomelanin (red/yellow), via regulation of cAMP signaling in melanocytes. This chain is Melanocyte-stimulating hormone receptor (MC1R), found in Colobus guereza (Mantled guereza).